A 147-amino-acid polypeptide reads, in one-letter code: Ubiquitin-conjugating enzyme E2 5A (147 aa).

Residues 1-15 (MASKRIQKELKDLQK) are compositionally biased toward basic and acidic residues. A disordered region spans residues 1–24 (MASKRIQKELKDLQKDPPTSCSAG). The UBC core domain occupies 1–147 (MASKRIQKEL…ARTWTQRYAM (147 aa)). The active-site Glycyl thioester intermediate is Cys85.

The protein belongs to the ubiquitin-conjugating enzyme family.

It catalyses the reaction S-ubiquitinyl-[E1 ubiquitin-activating enzyme]-L-cysteine + [E2 ubiquitin-conjugating enzyme]-L-cysteine = [E1 ubiquitin-activating enzyme]-L-cysteine + S-ubiquitinyl-[E2 ubiquitin-conjugating enzyme]-L-cysteine.. The protein operates within protein modification; protein ubiquitination. Functionally, E2 conjugating enzyme that associates with the E3 ubiquitin-protein ligase EL5 to mediate ubiquitination of target proteins. This Oryza sativa subsp. japonica (Rice) protein is Ubiquitin-conjugating enzyme E2 5A (UBC5A).